The following is a 243-amino-acid chain: Probable transcriptional regulatory protein TTE1135 (243 aa).

Belongs to the TACO1 family.

It is found in the cytoplasm. This Caldanaerobacter subterraneus subsp. tengcongensis (strain DSM 15242 / JCM 11007 / NBRC 100824 / MB4) (Thermoanaerobacter tengcongensis) protein is Probable transcriptional regulatory protein TTE1135.